The following is a 639-amino-acid chain: Tetracycline resistance protein TetM from transposon Tn5251 (639 aa).

A tr-type G domain is found at 1–242; the sequence is MKIINIGVLA…VITNKFYSST (242 aa). Residues 10 to 17, 74 to 78, and 128 to 131 contribute to the GTP site; these read AHVDAGKT, DTPGH, and NKID.

Belongs to the TRAFAC class translation factor GTPase superfamily. Classic translation factor GTPase family. TetM/TetO subfamily.

Its function is as follows. Abolishes the inhibitory effect of tetracyclin on protein synthesis by a non-covalent modification of the ribosomes. The protein is Tetracycline resistance protein TetM from transposon Tn5251 (tetM(5251)) of Streptococcus pneumoniae.